Here is a 756-residue protein sequence, read N- to C-terminus: Serine/threonine-protein kinase tousled-like 1-B (756 aa).

Low complexity-rich tracts occupy residues 1–12 (MSVQSNSNSSGS) and 23–34 (STGSPTPGSVSP). Disordered regions lie at residues 1 to 56 (MSVQ…LDPR) and 69 to 185 (VSGN…QNSS). The span at 45–56 (EGMDELHSLDPR) shows a compositional bias: basic and acidic residues. Over residues 72 to 85 (NTGGSTGSASGGPK) the composition is skewed to gly residues. The segment covering 93–103 (SSHSFGSLGSS) has biased composition (low complexity). Positions 104-120 (SDKESETPEKKHFESSR) are enriched in basic and acidic residues. Residues 243 to 268 (DLRRQIDEQQKLLERFKERLNKCTTM) are a coiled coil. The disordered stretch occupies residues 339 to 375 (KLLAKRKPSSTPSSQSPTPNESKQRKTKAVNGADNDP). The segment covering 347-357 (SSTPSSQSPTP) has biased composition (low complexity). A coiled-coil region spans residues 397–435 (FKLRLGHLKKEEAEIQAELERLERVRNLHIRELKRINNE). The region spanning 450-728 (YLLLHLLGRG…VHQLGSDSYL (279 aa)) is the Protein kinase domain. Residues 456-464 (LGRGGFSEV) and K479 each bind ATP. Residue D580 is the Proton acceptor of the active site. The segment at 734–756 (RSNSSGNLQATPASPAPSGIISY) is disordered. Positions 735–745 (SNSSGNLQATP) are enriched in polar residues.

This sequence belongs to the protein kinase superfamily. Ser/Thr protein kinase family. Mg(2+) serves as cofactor.

The protein localises to the nucleus. The enzyme catalyses L-seryl-[protein] + ATP = O-phospho-L-seryl-[protein] + ADP + H(+). It catalyses the reaction L-threonyl-[protein] + ATP = O-phospho-L-threonyl-[protein] + ADP + H(+). This Danio rerio (Zebrafish) protein is Serine/threonine-protein kinase tousled-like 1-B (tlk1b).